Consider the following 339-residue polypeptide: Glyceraldehyde-3-phosphate dehydrogenase (339 aa).

NAD(+) contacts are provided by residues 12–13, D34, and K79; that span reads RI. D-glyceraldehyde 3-phosphate is bound by residues 150 to 152, T181, 210 to 211, and R233; these read SCT and TG. C151 acts as the Nucleophile in catalysis. N316 is an NAD(+) binding site.

It belongs to the glyceraldehyde-3-phosphate dehydrogenase family. As to quaternary structure, homotetramer.

The protein resides in the cytoplasm. It carries out the reaction D-glyceraldehyde 3-phosphate + phosphate + NAD(+) = (2R)-3-phospho-glyceroyl phosphate + NADH + H(+). It functions in the pathway carbohydrate degradation; glycolysis; pyruvate from D-glyceraldehyde 3-phosphate: step 1/5. The sequence is that of Glyceraldehyde-3-phosphate dehydrogenase (GPD) from Cryptococcus neoformans var. neoformans serotype D (strain B-3501A) (Filobasidiella neoformans).